The primary structure comprises 137 residues: Acidic phospholipase A2 Vur-PL3 (137 aa).

The first 16 residues, 1–16, serve as a signal peptide directing secretion; it reads MRTLWIVAVCLIGVEG. 7 disulfides stabilise this stretch: cysteine 42–cysteine 131, cysteine 44–cysteine 60, cysteine 59–cysteine 111, cysteine 65–cysteine 137, cysteine 66–cysteine 104, cysteine 73–cysteine 97, and cysteine 91–cysteine 102. Ca(2+) contacts are provided by tyrosine 43, glycine 45, and glycine 47. Histidine 63 is an active-site residue. Aspartate 64 is a binding site for Ca(2+). Aspartate 105 is a catalytic residue.

Ca(2+) is required as a cofactor. As to expression, expressed by the venom gland.

The protein localises to the secreted. The enzyme catalyses a 1,2-diacyl-sn-glycero-3-phosphocholine + H2O = a 1-acyl-sn-glycero-3-phosphocholine + a fatty acid + H(+). This Vipera renardi (Steppe viper) protein is Acidic phospholipase A2 Vur-PL3.